The chain runs to 354 residues: Glutamine synthetase cytosolic isozyme 1-3 (354 aa).

S2 bears the N-acetylserine mark. 2 positions are modified to phosphoserine: S2 and S48. A GS beta-grasp domain is found at 19–99; that stretch reads IIAEYIWIGG…VMCDAYTPAG (81 aa). Residues 106–354 form the GS catalytic domain; sequence KRHNAAKIFS…SMIAETTILG (249 aa).

This sequence belongs to the glutamine synthetase family. Homooctamer. Expressed in the pericycle in the region of mature root.

It localises to the cytoplasm. The catalysed reaction is L-glutamate + NH4(+) + ATP = L-glutamine + ADP + phosphate + H(+). Its function is as follows. Low-affinity glutamine synthetase. May contribute to the homeostatic control of glutamine synthesis in roots. The chain is Glutamine synthetase cytosolic isozyme 1-3 (GLN1-3) from Arabidopsis thaliana (Mouse-ear cress).